The sequence spans 132 residues: Cell division protein FtsL (132 aa).

The Cytoplasmic portion of the chain corresponds to 1 to 50 (MAELKKMRHNHYDVPVMDEPVIASQIKKTNQKKESFQLPQKKLNKISVFE). The helical transmembrane segment at 51–71 (KILCILLLCSIVGIVVITIQI) threads the bilayer. At 72–132 (RTTISETMNN…EIDGNLRKVK (61 aa)) the chain is on the extracellular side.

This sequence belongs to the FtsL family.

It localises to the cell membrane. Essential cell division protein. This Melissococcus plutonius (strain ATCC 35311 / DSM 29964 / CIP 104052 / LMG 20360 / NCIMB 702443) protein is Cell division protein FtsL.